A 907-amino-acid polypeptide reads, in one-letter code: Leucine-rich repeat-containing G-protein coupled receptor 5 (907 aa).

Positions 1-21 are cleaved as a signal peptide; it reads MDTSSVGVLLSLPVLLQLAAG. The Extracellular portion of the chain corresponds to 22–553; that stretch reads GGSPRPGTLL…SPGPFKLCEY (532 aa). The LRRNT domain occupies 33-64; the sequence is GCPAHCQCEPDGRMLLRVDCSDLGLSELPSNL. 2 disulfide bridges follow: cysteine 34/cysteine 40 and cysteine 38/cysteine 52. 17 LRR repeats span residues 44–64, 65–88, 89–112, 114–136, 137–160, 162–184, 185–208, 209–232, 233–256, 257–279, 281–303, 304–327, 328–350, 351–375, 377–396, 397–420, and 421–444; these read GRML…PSNL, SVFT…PLHS, LRFL…AFAG, YSLK…ALQN, LRSL…CFSG, HSLR…AFRS, LSAL…AFGN, LSSL…CFDG, LHSL…VRTL, SNLK…AFVG, PSLI…AFQH, LPEL…LTGT, ASLE…VCDQ, LPNL…VCQK, QKID…TFQQ, LFSL…AFST, and LPSL…GLHG. 2 N-linked (GlcNAc...) asparagine glycosylation sites follow: asparagine 63 and asparagine 77. N-linked (GlcNAc...) asparagine glycosylation occurs at asparagine 208. Cysteine 348 and cysteine 373 are joined by a disulfide. Cysteine 479 and cysteine 541 are disulfide-bonded. N-linked (GlcNAc...) asparagine glycosylation is present at asparagine 500. Residues 554–574 traverse the membrane as a helical segment; the sequence is LFGSWLIRIGVWTIAVLALTC. The stretch at 564–585 is one LRR 18 repeat; that stretch reads VWTIAVLALTCNALVTSTVFRA. Residues 575-593 are Cytoplasmic-facing; it reads NALVTSTVFRAAVYISSIK. A helical transmembrane segment spans residues 594–614; sequence LLIGLIAAVNMLMGVSSAVLA. Residues 615–638 are Extracellular-facing; sequence GVDAFTFGSFAQHGAWWEQAVGCQ. The cysteines at positions 637 and 712 are disulfide-linked. The helical transmembrane segment at 639-659 threads the bilayer; sequence VVGFLSIFASESSVFLLTLAA. Residues 660–682 lie on the Cytoplasmic side of the membrane; that stretch reads LERGWSVKCSAKFETQTPFPSLR. A helical transmembrane segment spans residues 683-703; it reads ATLALCALLAGTVAAVPLLGG. The Extracellular segment spans residues 704-723; sequence SEYSASPLCLPLPFGEPRAT. The helical transmembrane segment at 724–744 threads the bilayer; the sequence is GYMVALVLLNSLCFLVMTVAY. Topologically, residues 745–767 are cytoplasmic; sequence TRLYCHLEKGDLESMWDCSMVKH. A helical transmembrane segment spans residues 768-788; that stretch reads VALLLFTNCILHCPVAFLSFS. Topologically, residues 789–802 are extracellular; that stretch reads SLLNLTFISPEVIK. Asparagine 792 carries an N-linked (GlcNAc...) asparagine glycan. A helical transmembrane segment spans residues 803–823; it reads FILLVIVPLPACLNPLLYILF. Residues 824–907 lie on the Cytoplasmic side of the membrane; the sequence is NPHFKEDLGS…LSSVAFVPCL (84 aa).

The protein belongs to the G-protein coupled receptor 1 family. As to quaternary structure, identified in a complex composed of RNF43, LGR5 and RSPO1. Also interacts with other R-spondin ligands, including RSPO2, RSPO3 and RSPO4.

Its subcellular location is the cell membrane. The protein localises to the golgi apparatus. It localises to the trans-Golgi network membrane. Its function is as follows. Receptor for R-spondins that potentiates the canonical Wnt signaling pathway and acts as a stem cell marker of the intestinal epithelium and the hair follicle. Upon binding to R-spondins (RSPO1, RSPO2, RSPO3 or RSPO4), associates with phosphorylated LRP6 and frizzled receptors that are activated by extracellular Wnt receptors, triggering the canonical Wnt signaling pathway to increase expression of target genes. In contrast to classical G-protein coupled receptors, does not activate heterotrimeric G-proteins to transduce the signal. Involved in the development and/or maintenance of the adult intestinal stem cells during postembryonic development. This Bos taurus (Bovine) protein is Leucine-rich repeat-containing G-protein coupled receptor 5 (LGR5).